The chain runs to 242 residues: Biosynthetic peptidoglycan transglycosylase (242 aa).

A helical membrane pass occupies residues 19–39 (ILAALAVFWGGGIALFSVVPV).

The protein belongs to the glycosyltransferase 51 family.

It is found in the cell inner membrane. The catalysed reaction is [GlcNAc-(1-&gt;4)-Mur2Ac(oyl-L-Ala-gamma-D-Glu-L-Lys-D-Ala-D-Ala)](n)-di-trans,octa-cis-undecaprenyl diphosphate + beta-D-GlcNAc-(1-&gt;4)-Mur2Ac(oyl-L-Ala-gamma-D-Glu-L-Lys-D-Ala-D-Ala)-di-trans,octa-cis-undecaprenyl diphosphate = [GlcNAc-(1-&gt;4)-Mur2Ac(oyl-L-Ala-gamma-D-Glu-L-Lys-D-Ala-D-Ala)](n+1)-di-trans,octa-cis-undecaprenyl diphosphate + di-trans,octa-cis-undecaprenyl diphosphate + H(+). Its pathway is cell wall biogenesis; peptidoglycan biosynthesis. In terms of biological role, peptidoglycan polymerase that catalyzes glycan chain elongation from lipid-linked precursors. The sequence is that of Biosynthetic peptidoglycan transglycosylase from Salmonella choleraesuis (strain SC-B67).